The chain runs to 353 residues: Nicotinate-nucleotide--dimethylbenzimidazole phosphoribosyltransferase (353 aa).

Catalysis depends on E319, which acts as the Proton acceptor.

This sequence belongs to the CobT family.

It carries out the reaction 5,6-dimethylbenzimidazole + nicotinate beta-D-ribonucleotide = alpha-ribazole 5'-phosphate + nicotinate + H(+). Its pathway is nucleoside biosynthesis; alpha-ribazole biosynthesis; alpha-ribazole from 5,6-dimethylbenzimidazole: step 1/2. Its function is as follows. Catalyzes the synthesis of alpha-ribazole-5'-phosphate from nicotinate mononucleotide (NAMN) and 5,6-dimethylbenzimidazole (DMB). This is Nicotinate-nucleotide--dimethylbenzimidazole phosphoribosyltransferase from Chlorobaculum parvum (strain DSM 263 / NCIMB 8327) (Chlorobium vibrioforme subsp. thiosulfatophilum).